A 283-amino-acid polypeptide reads, in one-letter code: 4-hydroxy-3-methylbut-2-enyl diphosphate reductase (283 aa).

Cys12 is a [4Fe-4S] cluster binding site. (2E)-4-hydroxy-3-methylbut-2-enyl diphosphate-binding residues include His40 and His72. Dimethylallyl diphosphate-binding residues include His40 and His72. Residues His40 and His72 each coordinate isopentenyl diphosphate. Cys94 is a binding site for [4Fe-4S] cluster. His122 contributes to the (2E)-4-hydroxy-3-methylbut-2-enyl diphosphate binding site. His122 is a binding site for dimethylallyl diphosphate. His122 contributes to the isopentenyl diphosphate binding site. Glu124 serves as the catalytic Proton donor. Position 160 (Thr160) interacts with (2E)-4-hydroxy-3-methylbut-2-enyl diphosphate. Cys188 is a binding site for [4Fe-4S] cluster. Ser216, Asn218, and Ser259 together coordinate (2E)-4-hydroxy-3-methylbut-2-enyl diphosphate. Dimethylallyl diphosphate-binding residues include Ser216, Asn218, and Ser259. Ser216, Asn218, and Ser259 together coordinate isopentenyl diphosphate.

It belongs to the IspH family. Requires [4Fe-4S] cluster as cofactor.

It catalyses the reaction isopentenyl diphosphate + 2 oxidized [2Fe-2S]-[ferredoxin] + H2O = (2E)-4-hydroxy-3-methylbut-2-enyl diphosphate + 2 reduced [2Fe-2S]-[ferredoxin] + 2 H(+). The enzyme catalyses dimethylallyl diphosphate + 2 oxidized [2Fe-2S]-[ferredoxin] + H2O = (2E)-4-hydroxy-3-methylbut-2-enyl diphosphate + 2 reduced [2Fe-2S]-[ferredoxin] + 2 H(+). It participates in isoprenoid biosynthesis; dimethylallyl diphosphate biosynthesis; dimethylallyl diphosphate from (2E)-4-hydroxy-3-methylbutenyl diphosphate: step 1/1. It functions in the pathway isoprenoid biosynthesis; isopentenyl diphosphate biosynthesis via DXP pathway; isopentenyl diphosphate from 1-deoxy-D-xylulose 5-phosphate: step 6/6. Its function is as follows. Catalyzes the conversion of 1-hydroxy-2-methyl-2-(E)-butenyl 4-diphosphate (HMBPP) into a mixture of isopentenyl diphosphate (IPP) and dimethylallyl diphosphate (DMAPP). Acts in the terminal step of the DOXP/MEP pathway for isoprenoid precursor biosynthesis. This is 4-hydroxy-3-methylbut-2-enyl diphosphate reductase from Dictyoglomus thermophilum (strain ATCC 35947 / DSM 3960 / H-6-12).